A 610-amino-acid polypeptide reads, in one-letter code: Methionine--tRNA ligase (610 aa).

Positions 12–22 (PYANGPRHIGH) match the 'HIGH' region motif. Zn(2+) contacts are provided by Cys-144, Cys-147, Cys-157, and Cys-160. Positions 348 to 352 (KFSSS) match the 'KMSKS' region motif. An ATP-binding site is contributed by Ser-351.

Belongs to the class-I aminoacyl-tRNA synthetase family. MetG type 1 subfamily. Monomer. Requires Zn(2+) as cofactor.

It localises to the cytoplasm. It carries out the reaction tRNA(Met) + L-methionine + ATP = L-methionyl-tRNA(Met) + AMP + diphosphate. In terms of biological role, is required not only for elongation of protein synthesis but also for the initiation of all mRNA translation through initiator tRNA(fMet) aminoacylation. In Corynebacterium diphtheriae (strain ATCC 700971 / NCTC 13129 / Biotype gravis), this protein is Methionine--tRNA ligase.